A 514-amino-acid polypeptide reads, in one-letter code: Multifunctional alkaline phosphatase superfamily protein pRL90232 (514 aa).

Residues D12, C57, D324, and H325 each contribute to the Mn(2+) site. C57 acts as the Nucleophile in catalysis. C57 bears the 3-oxoalanine (Cys) mark.

This sequence belongs to the alkaline phosphatase superfamily. Homotetramer. The cofactor is Mn(2+). In terms of processing, the conversion to 3-oxoalanine (also known as C-formylglycine, FGly), of a serine or cysteine residue in prokaryotes and of a cysteine residue in eukaryotes, is critical for catalytic activity.

Functionally, hydrolytic enzyme with a broad substrate specificity acting on phosphate diesters and phosphonate monoesters. This chain is Multifunctional alkaline phosphatase superfamily protein pRL90232, found in Rhizobium johnstonii (strain DSM 114642 / LMG 32736 / 3841) (Rhizobium leguminosarum bv. viciae).